Here is a 196-residue protein sequence, read N- to C-terminus: Large ribosomal subunit protein bL9 (196 aa).

The interval 174 to 196 (QAAADLLEGGAGQQASEYTEAQA) is disordered. Polar residues predominate over residues 186–196 (QQASEYTEAQA).

It belongs to the bacterial ribosomal protein bL9 family.

In terms of biological role, binds to the 23S rRNA. The chain is Large ribosomal subunit protein bL9 from Phenylobacterium zucineum (strain HLK1).